The chain runs to 356 residues: uncharacterized protein (356 aa).

A run of 6 helical transmembrane segments spans residues 2 to 22 (FEAI…FHRL), 35 to 55 (EYVT…PIPF), 76 to 96 (NMIY…FIFG), 99 to 119 (IIYG…GPFL), 124 to 144 (IISL…LALL), and 151 to 171 (VEIL…AITF). One can recognise a GGDEF domain in the interval 218-353 (QSLALLLIDI…GRNKVMFNPI (136 aa)).

It is found in the cell membrane. This is an uncharacterized protein from Staphylococcus epidermidis (strain ATCC 35984 / DSM 28319 / BCRC 17069 / CCUG 31568 / BM 3577 / RP62A).